We begin with the raw amino-acid sequence, 503 residues long: Lysine--tRNA ligase (503 aa).

Residues E412 and E419 each contribute to the Mg(2+) site.

The protein belongs to the class-II aminoacyl-tRNA synthetase family. Homodimer. Mg(2+) is required as a cofactor.

It is found in the cytoplasm. It carries out the reaction tRNA(Lys) + L-lysine + ATP = L-lysyl-tRNA(Lys) + AMP + diphosphate. This chain is Lysine--tRNA ligase, found in Idiomarina loihiensis (strain ATCC BAA-735 / DSM 15497 / L2-TR).